The following is a 327-amino-acid chain: MSHLAELVASAKAAINEASDVAALDNVRVEYLGKKGHLTLQMTTLRELPPEERPAAGAVINEAKEQVQQALNARKAELEGAALNARLAAETIDVSLPGRRIENGGLHPVTRTIDRIESFFGELGFTVATGPEIEDDYHNFDALNIPGHHPARADHDTFWFDATRLLRTQTSGVQIRTMENQQPPIRIIAPGRVYRNDYDQTHTPMFHQMEGLIVDKNISFTNLKGTLHDFLNNFFEEDLQVRFRPSYFPFTEPSAEVDVMGKNGKWLEVLGCGMVHPNVLRNVGIDPEVYSGFAFGMGMERLTMLRYGVTDLRAFFENDLRFLKQFK.

Glu252 lines the Mg(2+) pocket.

Belongs to the class-II aminoacyl-tRNA synthetase family. Phe-tRNA synthetase alpha subunit type 1 subfamily. As to quaternary structure, tetramer of two alpha and two beta subunits. Mg(2+) serves as cofactor.

Its subcellular location is the cytoplasm. It carries out the reaction tRNA(Phe) + L-phenylalanine + ATP = L-phenylalanyl-tRNA(Phe) + AMP + diphosphate + H(+). This Klebsiella pneumoniae subsp. pneumoniae (strain ATCC 700721 / MGH 78578) protein is Phenylalanine--tRNA ligase alpha subunit.